The following is a 326-amino-acid chain: Protein ORF5 in retron Ec67 (326 aa).

The tract at residues 1-24 is disordered; that stretch reads MGKSKKNRAAATNQLKHKSQTSAE. Residues 10-24 show a composition bias toward polar residues; it reads AATNQLKHKSQTSAE.

The protein belongs to the phage portal family. PBSX subfamily.

This chain is Protein ORF5 in retron Ec67, found in Escherichia coli.